A 233-amino-acid chain; its full sequence is Large ribosomal subunit protein uL1 (233 aa).

This sequence belongs to the universal ribosomal protein uL1 family. Part of the 50S ribosomal subunit.

Binds directly to 23S rRNA. The L1 stalk is quite mobile in the ribosome, and is involved in E site tRNA release. In terms of biological role, protein L1 is also a translational repressor protein, it controls the translation of the L11 operon by binding to its mRNA. The polypeptide is Large ribosomal subunit protein uL1 (Shewanella oneidensis (strain ATCC 700550 / JCM 31522 / CIP 106686 / LMG 19005 / NCIMB 14063 / MR-1)).